A 310-amino-acid polypeptide reads, in one-letter code: Malate dehydrogenase (310 aa).

NAD(+) is bound by residues 7–12 (GAGNVG) and aspartate 32. Substrate-binding residues include arginine 81 and arginine 87. NAD(+) is bound by residues asparagine 94 and 117-119 (VSN). Substrate contacts are provided by asparagine 119 and arginine 150. The active-site Proton acceptor is the histidine 174.

Belongs to the LDH/MDH superfamily. MDH type 3 family. In terms of assembly, homotetramer; arranged as a dimer of dimers.

The catalysed reaction is (S)-malate + NAD(+) = oxaloacetate + NADH + H(+). In terms of biological role, catalyzes the reversible oxidation of malate to oxaloacetate. This is Malate dehydrogenase from Chlorobaculum parvum (strain DSM 263 / NCIMB 8327) (Chlorobium vibrioforme subsp. thiosulfatophilum).